The chain runs to 333 residues: MKKCLFPLSVLAVIVATGCGNTSPYANDSYEKHANAPTFTTIDTAGIRIIGQNDTYLLPATNVKKGENMDIRPPAIPMAIIGNSVAQFDGERASIIYPSEKAEVYNIRQMARLLEERSIKFTTKDNQIETDWTNFGAKTDQGETLLRYQINQVGNQEANALVVSVLEAKRDDILFTPSQKEKERYTSSLLNQFIGELNADYRSQAQAVATPTTTGPVQTAIITDGNNHLALAMSSEFQQSWSKLGDALPQLGFETEEETVGRGYRKLNYKPLGATEWARLGVNRPELEDGEYSMQISAHGKQSSVVISDEDGNAISGDAAQAMYRALANLISK.

Residues 1-18 (MKKCLFPLSVLAVIVATG) form the signal peptide. Cysteine 19 is lipidated: N-palmitoyl cysteine. Cysteine 19 carries the S-diacylglycerol cysteine lipid modification.

Belongs to the BamC family. As to quaternary structure, part of the Bam complex.

The protein localises to the cell outer membrane. Part of the outer membrane protein assembly complex, which is involved in assembly and insertion of beta-barrel proteins into the outer membrane. This Actinobacillus succinogenes (strain ATCC 55618 / DSM 22257 / CCUG 43843 / 130Z) protein is Outer membrane protein assembly factor BamC.